The primary structure comprises 456 residues: Proline--tRNA ligase (456 aa).

The protein belongs to the class-II aminoacyl-tRNA synthetase family. ProS type 3 subfamily. As to quaternary structure, homodimer.

Its subcellular location is the cytoplasm. It carries out the reaction tRNA(Pro) + L-proline + ATP = L-prolyl-tRNA(Pro) + AMP + diphosphate. Catalyzes the attachment of proline to tRNA(Pro) in a two-step reaction: proline is first activated by ATP to form Pro-AMP and then transferred to the acceptor end of tRNA(Pro). The polypeptide is Proline--tRNA ligase (Methanococcus aeolicus (strain ATCC BAA-1280 / DSM 17508 / OCM 812 / Nankai-3)).